We begin with the raw amino-acid sequence, 157 residues long: Regenerating islet-derived protein 4 (157 aa).

Residues M1–S22 form the signal peptide. C29 and C40 are joined by a disulfide. Residues Y36–K154 enclose the C-type lectin domain. N-linked (GlcNAc...) asparagine glycans are attached at residues N49 and N62. Cystine bridges form between C57–C153 and C128–C145. A carbohydrate-binding positions include D97–Q102 and K134–K136.

It is found in the secreted. In terms of biological role, calcium-independent lectin displaying mannose-binding specificity and able to maintain carbohydrate recognition activity in an acidic environment. May be involved in inflammatory and metaplastic responses of the gastrointestinal epithelium. The polypeptide is Regenerating islet-derived protein 4 (Reg4) (Mus musculus (Mouse)).